Here is a 439-residue protein sequence, read N- to C-terminus: Acyl transferase 7 (439 aa).

The disordered stretch occupies residues 1-25; it reads MAAAAPDKAVERLSQKLVHPSSPTP. Residues histidine 176 and aspartate 383 each act as proton acceptor in the active site.

This sequence belongs to the plant acyltransferase family.

Its function is as follows. Involved in the incorporation of ferulate into the cell wall. May act as arabinoxylan feruloyl transferase. This Oryza sativa subsp. japonica (Rice) protein is Acyl transferase 7.